We begin with the raw amino-acid sequence, 134 residues long: MAKSPSNNAAQRVRKKVRKNVADGIAHVHASFNNTIITITDRQGNALSWASSGGQGFKGSRKSTPFAAQVASEVAGRAAIEQGIKNLDVEIKGPGPGRESSVRALGALGIRINSIADVTPVPHNGCRPQKRRRI.

The protein belongs to the universal ribosomal protein uS11 family. In terms of assembly, part of the 30S ribosomal subunit. Interacts with proteins S7 and S18. Binds to IF-3.

Its function is as follows. Located on the platform of the 30S subunit, it bridges several disparate RNA helices of the 16S rRNA. Forms part of the Shine-Dalgarno cleft in the 70S ribosome. The chain is Small ribosomal subunit protein uS11 from Polaromonas sp. (strain JS666 / ATCC BAA-500).